The primary structure comprises 317 residues: Beta-ketoacyl-[acyl-carrier-protein] synthase III (317 aa).

Active-site residues include C112 and H244. Positions 245-249 (QANLR) are ACP-binding. N274 is an active-site residue.

The protein belongs to the thiolase-like superfamily. FabH family. Homodimer.

Its subcellular location is the cytoplasm. The enzyme catalyses malonyl-[ACP] + acetyl-CoA + H(+) = 3-oxobutanoyl-[ACP] + CO2 + CoA. Its pathway is lipid metabolism; fatty acid biosynthesis. Catalyzes the condensation reaction of fatty acid synthesis by the addition to an acyl acceptor of two carbons from malonyl-ACP. Catalyzes the first condensation reaction which initiates fatty acid synthesis and may therefore play a role in governing the total rate of fatty acid production. Possesses both acetoacetyl-ACP synthase and acetyl transacylase activities. Its substrate specificity determines the biosynthesis of branched-chain and/or straight-chain of fatty acids. This is Beta-ketoacyl-[acyl-carrier-protein] synthase III from Sodalis glossinidius (strain morsitans).